We begin with the raw amino-acid sequence, 253 residues long: Probable transcriptional regulatory protein Mlut_12910 (253 aa).

It belongs to the TACO1 family.

It is found in the cytoplasm. In Micrococcus luteus (strain ATCC 4698 / DSM 20030 / JCM 1464 / CCM 169 / CCUG 5858 / IAM 1056 / NBRC 3333 / NCIMB 9278 / NCTC 2665 / VKM Ac-2230) (Micrococcus lysodeikticus), this protein is Probable transcriptional regulatory protein Mlut_12910.